The following is a 379-amino-acid chain: Lipoyl synthase 2, mitochondrial (379 aa).

[4Fe-4S] cluster is bound by residues Cys106, Cys111, Cys117, Cys137, Cys141, Cys144, and Ser352. A Radical SAM core domain is found at Glu122–Leu341.

The protein belongs to the radical SAM superfamily. Lipoyl synthase family. The cofactor is [4Fe-4S] cluster.

The protein localises to the mitochondrion. The enzyme catalyses [[Fe-S] cluster scaffold protein carrying a second [4Fe-4S](2+) cluster] + N(6)-octanoyl-L-lysyl-[protein] + 2 oxidized [2Fe-2S]-[ferredoxin] + 2 S-adenosyl-L-methionine + 4 H(+) = [[Fe-S] cluster scaffold protein] + N(6)-[(R)-dihydrolipoyl]-L-lysyl-[protein] + 4 Fe(3+) + 2 hydrogen sulfide + 2 5'-deoxyadenosine + 2 L-methionine + 2 reduced [2Fe-2S]-[ferredoxin]. It functions in the pathway protein modification; protein lipoylation via endogenous pathway; protein N(6)-(lipoyl)lysine from octanoyl-[acyl-carrier-protein]: step 2/2. Its function is as follows. Catalyzes the radical-mediated insertion of two sulfur atoms into the C-6 and C-8 positions of the octanoyl moiety bound to the lipoyl domains of lipoate-dependent enzymes, thereby converting the octanoylated domains into lipoylated derivatives. This is Lipoyl synthase 2, mitochondrial from Drosophila yakuba (Fruit fly).